Reading from the N-terminus, the 118-residue chain is Beta-2-microglobulin (118 aa).

The N-terminal stretch at 1–20 (MAVSAALVLLGLLSLSGLDA) is a signal peptide. Residues 25–112 (PEVQVYSRHP…HVTLTQPKIV (88 aa)) enclose the Ig-like C1-type domain. A disulfide bond links Cys45 and Cys99.

This sequence belongs to the beta-2-microglobulin family. In terms of assembly, heterodimer of an alpha chain and a beta chain. Beta-2-microglobulin is the beta-chain of major histocompatibility complex class I molecules.

It is found in the secreted. Functionally, component of the class I major histocompatibility complex (MHC). Involved in the presentation of peptide antigens to the immune system. This is Beta-2-microglobulin (B2M) from Ovis aries (Sheep).